A 113-amino-acid polypeptide reads, in one-letter code: RING-box protein 2 (113 aa).

Residues methionine 1–glycine 26 form a disordered region. Alanine 2 is subject to N-acetylalanine. Threonine 10 carries the post-translational modification Phosphothreonine; by CK2. Zn(2+)-binding residues include cysteine 50, cysteine 53, cysteine 61, cysteine 64, cysteine 73, cysteine 80, histidine 82, histidine 85, cysteine 87, cysteine 88, cysteine 99, and cysteine 102. The RING-type zinc-finger motif lies at cysteine 61–glutamine 103.

This sequence belongs to the RING-box family. In terms of assembly, catalytic component of multiple cullin-5-RING E3 ubiquitin-protein ligase complexes (ECS complexes, also named CRL5 complexes) composed of CUL5, Elongin BC (ELOB and ELOC), RNF7/RBX2 and a variable SOCS box domain-containing protein as substrate-specific recognition component. Also interacts (with lower preference) with CUL1, CUL2, CUL3, CUL4A and CUL4B; additional evidence is however required to confirm this result in vivo. Interacts with UBE2F. Interacts with CSNK2B, the interaction is not affected by phosphorylation by CK2. May also interact with DCUN1D1, DCUN1D2, DCUN1D3, DCUN1D4 and DCUN1D5. As to quaternary structure, (Microbial infection) Following infection by HIV-1 virus, component of a cullin-5-RING E3 ubiquitin-protein ligase complex (ECS complex) hijacked by the HIV-1 Vif protein. Phosphorylation at Thr-10 by CK2 promotes its degradation by the proteasome. As to expression, expressed in heart, liver, skeletal muscle and pancreas. At very low levels expressed in brain, placenta and lung.

Its subcellular location is the cytoplasm. It localises to the nucleus. It carries out the reaction S-ubiquitinyl-[E2 ubiquitin-conjugating enzyme]-L-cysteine + [acceptor protein]-L-lysine = [E2 ubiquitin-conjugating enzyme]-L-cysteine + N(6)-ubiquitinyl-[acceptor protein]-L-lysine.. The enzyme catalyses S-[NEDD8-protein]-yl-[E2 NEDD8-conjugating enzyme]-L-cysteine + [cullin]-L-lysine = [E2 NEDD8-conjugating enzyme]-L-cysteine + N(6)-[NEDD8-protein]-yl-[cullin]-L-lysine.. Its pathway is protein modification; protein ubiquitination. The protein operates within protein modification; protein neddylation. In terms of biological role, catalytic component of multiple cullin-5-RING E3 ubiquitin-protein ligase complexes (ECS complexes), which mediate the ubiquitination and subsequent proteasomal degradation of target proteins. It is thereby involved in various biological processes, such as cell cycle progression, signal transduction and transcription. The functional specificity of the E3 ubiquitin-protein ligase ECS complexes depend on the variable SOCS box-containing substrate recognition component. Within ECS complexes, RNF7/RBX2 recruits the E2 ubiquitination enzyme to the complex via its RING-type and brings it into close proximity to the substrate. Catalytic subunit of various SOCS-containing ECS complexes, such as the ECS(SOCS7) complex, that regulate reelin signaling by mediating ubiquitination and degradation of DAB1. The ECS(SOCS2) complex mediates the ubiquitination and subsequent proteasomal degradation of phosphorylated EPOR and GHR. Promotes ubiquitination and degradation of NF1, thereby regulating Ras protein signal transduction. As part of the ECS(ASB9) complex, catalyzes ubiquitination and degradation of CKB. The ECS(SPSB3) complex catalyzes ubiquitination of nuclear CGAS. As part of the ECS(RAB40C) complex, mediates ANKRD28 ubiquitination and degradation, thereby inhibiting protein phosphatase 6 (PP6) complex activity and focal adhesion assembly during cell migration. As part of some ECS complex, catalyzes 'Lys-11'-linked ubiquitination and degradation of BTRC. ECS complexes and ARIH2 collaborate in tandem to mediate ubiquitination of target proteins; ARIH2 mediating addition of the first ubiquitin on CRLs targets. Specifically catalyzes the neddylation of CUL5 via its interaction with UBE2F. Does not catalyze neddylation of other cullins (CUL1, CUL2, CUL3, CUL4A or CUL4B). May play a role in protecting cells from apoptosis induced by redox agents. Its function is as follows. Inactive. (Microbial infection) Following infection by HIV-1 virus, catalytic component of a cullin-5-RING E3 ubiquitin-protein ligase complex (ECS complex) hijacked by the HIV-1 Vif protein, which catalyzes ubiquitination and degradation of APOBEC3F and APOBEC3G. The polypeptide is RING-box protein 2 (Homo sapiens (Human)).